Consider the following 204-residue polypeptide: Elongation factor Ts (204 aa).

The tract at residues 80–83 (TDFV) is involved in Mg(2+) ion dislocation from EF-Tu.

This sequence belongs to the EF-Ts family.

It is found in the cytoplasm. In terms of biological role, associates with the EF-Tu.GDP complex and induces the exchange of GDP to GTP. It remains bound to the aminoacyl-tRNA.EF-Tu.GTP complex up to the GTP hydrolysis stage on the ribosome. This Caldicellulosiruptor bescii (strain ATCC BAA-1888 / DSM 6725 / KCTC 15123 / Z-1320) (Anaerocellum thermophilum) protein is Elongation factor Ts.